The primary structure comprises 117 residues: Minor capsid protein VP2 (117 aa).

This sequence belongs to the lagovirus VP2 protein family. In terms of assembly, homooligomer. The portal-like structure consists in 12 copies of VP2. Interacts with capsid protein VP1.

The protein localises to the virion. The protein resides in the host cytoplasm. Minor structural protein that forms a portal-like structure at a unique three-fold axis of symmetry, following binding to the host receptor. The channel formed by VP2 may allow the delivery of the viral genome through the host endosomal membrane. The polypeptide is Minor capsid protein VP2 (Oryctolagus cuniculus (Rabbit)).